We begin with the raw amino-acid sequence, 344 residues long: D-arabinose dehydrogenase [NAD(P)+] heavy chain (344 aa).

Residue Y71 is the Proton donor of the active site. A substrate-binding site is contributed by H131. Residue T151 is modified to Phosphothreonine. 241-295 (SPLGSHGAPNLKIPLVKKLAEKYNVTGNDLLISYHIRQGTIVIPRSLNPVRISSS) serves as a coordination point for NADP(+).

Belongs to the aldo/keto reductase family. In terms of assembly, heterodimer of a heavy chain and a light chain.

The protein localises to the cytoplasm. It carries out the reaction D-arabinose + NADP(+) = D-arabinono-1,4-lactone + NADPH + H(+). The enzyme catalyses D-arabinose + NAD(+) = D-arabinono-1,4-lactone + NADH + H(+). Catalyzes the oxidation of D-arabinose, L-xylose, L-fucose and L-galactose in the presence of NADP(+). This chain is D-arabinose dehydrogenase [NAD(P)+] heavy chain (ARA1), found in Saccharomyces cerevisiae (strain ATCC 204508 / S288c) (Baker's yeast).